A 274-amino-acid polypeptide reads, in one-letter code: Beta-lysine N(6)-acetyltransferase (274 aa).

Positions 123–274 constitute an N-acetyltransferase domain; the sequence is FHLKIANETD…DMNFWYKLSE (152 aa).

Belongs to the acetyltransferase family.

The catalysed reaction is (3S)-3,6-diaminohexanoate + acetyl-CoA = (3S)-6-acetamido-3-aminohexanoate + CoA + H(+). Functionally, catalyzes the acetylation of beta-lysine to N6-acetyl-beta-lysine, a compatible solute produced by methanogenic archaea that helps cells to cope with salt stress. The protein is Beta-lysine N(6)-acetyltransferase of Methanococcus maripaludis (strain DSM 14266 / JCM 13030 / NBRC 101832 / S2 / LL).